Reading from the N-terminus, the 503-residue chain is Zinc finger and BTB domain-containing protein 37 (503 aa).

A BTB domain is found at 32–96 (CDIVVNVQGQ…CYTGRICLQL (65 aa)). Disordered regions lie at residues 140-206 (QTRT…SDVE) and 280-344 (GHGS…QVEE). Residues 144 to 154 (KHQERPPESHR) are compositionally biased toward basic and acidic residues. The segment covering 155–167 (VTPNLNRSLSPRH) has biased composition (polar residues). Basic and acidic residues predominate over residues 319–336 (TERHRARSESPGRMDEPK). 3 consecutive C2H2-type zinc fingers follow at residues 373–395 (LTCI…MRLH), 401–423 (FVCR…IRKH), and 429–452 (FHCH…RKNH). The disordered stretch occupies residues 457 to 503 (PLEGPHSISPETTVTSRGQAEEESPSQEETVAPGEAVQGSVSTTGPD). The segment covering 465–474 (SPETTVTSRG) has biased composition (polar residues).

The protein localises to the nucleus. Its function is as follows. May be involved in transcriptional regulation. This is Zinc finger and BTB domain-containing protein 37 (ZBTB37) from Homo sapiens (Human).